Here is a 108-residue protein sequence, read N- to C-terminus: Phosphoribosyl-ATP pyrophosphatase (108 aa).

Belongs to the PRA-PH family.

It is found in the cytoplasm. The enzyme catalyses 1-(5-phospho-beta-D-ribosyl)-ATP + H2O = 1-(5-phospho-beta-D-ribosyl)-5'-AMP + diphosphate + H(+). It participates in amino-acid biosynthesis; L-histidine biosynthesis; L-histidine from 5-phospho-alpha-D-ribose 1-diphosphate: step 2/9. The protein is Phosphoribosyl-ATP pyrophosphatase of Aromatoleum aromaticum (strain DSM 19018 / LMG 30748 / EbN1) (Azoarcus sp. (strain EbN1)).